Consider the following 470-residue polypeptide: Sulfate adenylyltransferase subunit 1 (470 aa).

Positions 22-238 (KELLRFITCG…ETIKIDYAYT (217 aa)) constitute a tr-type G domain. A G1 region spans residues 31 to 38 (GSVDDGKS). 31–38 (GSVDDGKS) provides a ligand contact to GTP. Residues 89–93 (GITID) form a G2 region. Residues 110–113 (DTPG) form a G3 region. Residues 110 to 114 (DTPGH) and 165 to 168 (NKMD) contribute to the GTP site. The segment at 165 to 168 (NKMD) is G4. The tract at residues 202–204 (SAL) is G5.

This sequence belongs to the TRAFAC class translation factor GTPase superfamily. Classic translation factor GTPase family. CysN/NodQ subfamily. In terms of assembly, heterodimer composed of CysD, the smaller subunit, and CysN.

The enzyme catalyses sulfate + ATP + H(+) = adenosine 5'-phosphosulfate + diphosphate. Its pathway is sulfur metabolism; hydrogen sulfide biosynthesis; sulfite from sulfate: step 1/3. With CysD forms the ATP sulfurylase (ATPS) that catalyzes the adenylation of sulfate producing adenosine 5'-phosphosulfate (APS) and diphosphate, the first enzymatic step in sulfur assimilation pathway. APS synthesis involves the formation of a high-energy phosphoric-sulfuric acid anhydride bond driven by GTP hydrolysis by CysN coupled to ATP hydrolysis by CysD. This is Sulfate adenylyltransferase subunit 1 from Francisella tularensis subsp. tularensis (strain SCHU S4 / Schu 4).